A 512-amino-acid polypeptide reads, in one-letter code: Polyamine aminopropyltransferase (512 aa).

Helical transmembrane passes span 19–39, 48–68, 76–96, 108–128, 151–171, 172–192, and 199–219; these read IVSI…SYIL, LTIS…EKFM, VWIE…MFGI, YLYS…PILI, AGGL…FGMV, KTAF…LWLF, and FIVH…GLFF. A PABS domain is found at 215–450; it reads AGLFFGEEMA…GNWGFVMASR (236 aa). A spermidine synthase region spans residues 217–457; that stretch reads LFFGEEMAFN…ASREEIDLDI (241 aa). Q245 is an S-methyl-5'-thioadenosine binding site. Residues H275 and D299 each contribute to the spermidine site. Residues D319 and 353–354 contribute to the S-methyl-5'-thioadenosine site; that span reads DA. The active-site Proton acceptor is the D371.

Belongs to the spermidine/spermine synthase family. In terms of assembly, homodimer or homotetramer.

The protein localises to the cell membrane. The enzyme catalyses S-adenosyl 3-(methylsulfanyl)propylamine + putrescine = S-methyl-5'-thioadenosine + spermidine + H(+). Its pathway is amine and polyamine biosynthesis; spermidine biosynthesis; spermidine from putrescine: step 1/1. In terms of biological role, catalyzes the irreversible transfer of a propylamine group from the amino donor S-adenosylmethioninamine (decarboxy-AdoMet) to putrescine (1,4-diaminobutane) to yield spermidine. In Oceanobacillus iheyensis (strain DSM 14371 / CIP 107618 / JCM 11309 / KCTC 3954 / HTE831), this protein is Polyamine aminopropyltransferase.